The primary structure comprises 481 residues: Glutamyl-tRNA(Gln) amidotransferase subunit A (481 aa).

Residues K76 and S151 each act as charge relay system in the active site. The active-site Acyl-ester intermediate is S175.

Belongs to the amidase family. GatA subfamily. Heterotrimer of A, B and C subunits.

It carries out the reaction L-glutamyl-tRNA(Gln) + L-glutamine + ATP + H2O = L-glutaminyl-tRNA(Gln) + L-glutamate + ADP + phosphate + H(+). Functionally, allows the formation of correctly charged Gln-tRNA(Gln) through the transamidation of misacylated Glu-tRNA(Gln) in organisms which lack glutaminyl-tRNA synthetase. The reaction takes place in the presence of glutamine and ATP through an activated gamma-phospho-Glu-tRNA(Gln). In Chlorobaculum parvum (strain DSM 263 / NCIMB 8327) (Chlorobium vibrioforme subsp. thiosulfatophilum), this protein is Glutamyl-tRNA(Gln) amidotransferase subunit A.